Consider the following 109-residue polypeptide: Putative RNase MJ1380 (109 aa).

Active-site residues include arginine 76 and histidine 81. An RX(4)HXY motif motif is present at residues 76–83 (RNILIHKY). Tyrosine 83 carries the O-di-AMP-tyrosine modification.

This sequence belongs to the HepT RNase toxin family. In terms of assembly, homodimer, probably forms a complex with cognate antitoxin MJ1379. Modified by cognate antitoxin MJ1379; probably at least 2 successive AMPylation events occur on Tyr-83.

Its function is as follows. Probable toxic component of a putative type VII toxin-antitoxin (TA) system, probably an RNase. Probably neutralized by cognate antitoxin MJ1379. Neutralization may be due to AMPylation by antitoxin MJ1379. The protein is Putative RNase MJ1380 of Methanocaldococcus jannaschii (strain ATCC 43067 / DSM 2661 / JAL-1 / JCM 10045 / NBRC 100440) (Methanococcus jannaschii).